The sequence spans 179 residues: Interleukin-10 (179 aa).

Positions 1 to 19 are cleaved as a signal peptide; the sequence is MPSSSALLCCLVFLAGVAA. 2 disulfides stabilise this stretch: C31–C127 and C81–C133. N-linked (GlcNAc...) asparagine glycosylation is present at N135.

This sequence belongs to the IL-10 family. In terms of assembly, homodimer. Interacts with IL10RA and IL10RB.

The protein localises to the secreted. In terms of biological role, major immune regulatory cytokine that acts on many cells of the immune system where it has profound anti-inflammatory functions, limiting excessive tissue disruption caused by inflammation. Mechanistically, IL10 binds to its heterotetrameric receptor comprising IL10RA and IL10RB leading to JAK1 and STAT2-mediated phosphorylation of STAT3. In turn, STAT3 translocates to the nucleus where it drives expression of anti-inflammatory mediators. Targets antigen-presenting cells (APCs) such as macrophages and monocytes and inhibits their release of pro-inflammatory cytokines including granulocyte-macrophage colony-stimulating factor /GM-CSF, granulocyte colony-stimulating factor/G-CSF, IL-1 alpha, IL-1 beta, IL-6, IL-8 and TNF-alpha. Also interferes with antigen presentation by reducing the expression of MHC-class II and co-stimulatory molecules, thereby inhibiting their ability to induce T cell activation. In addition, controls the inflammatory response of macrophages by reprogramming essential metabolic pathways including mTOR signaling. The chain is Interleukin-10 (IL10) from Bubalus carabanensis (Swamp type water buffalo).